Here is a 341-residue protein sequence, read N- to C-terminus: MSSIIRYDWTAEELHALFDLSLPELLYRAASVHRQHFDPAEIQVSTLLSVKTGGCPEDCSYCPQAQRYDTGVTAQKLMDVDAVVAKARQAKLAGASRFCMGAAWRSPKDRDIPKIASMIREVKALGLETCATLGMLNTCQAQALKDAGLDYYNHNVDTSPDFYDSVIHTRQYQDRLDTLAHVRDVGLKTCCGGIVGMGETRQHRVGLLLTLATLPAHPDSVPVNLLVQVAGTPLHGTQTLDPFEFVRMIAVARITMPRSMVRLSAGRESMSDELQLLCFMAGANSIFYGEKLLTTANPETERDQALFQRLGLRPMHLMENVSNKDQHHGNVHADIACKHVV.

A Radical SAM core domain is found at 40 to 267 (AEIQVSTLLS…RSMVRLSAGR (228 aa)). The [4Fe-4S] cluster site is built by C55, C59, and C62. 4 residues coordinate [2Fe-2S] cluster: C99, C130, C190, and R262.

Belongs to the radical SAM superfamily. Biotin synthase family. Homodimer. [4Fe-4S] cluster is required as a cofactor. Requires [2Fe-2S] cluster as cofactor.

The enzyme catalyses (4R,5S)-dethiobiotin + (sulfur carrier)-SH + 2 reduced [2Fe-2S]-[ferredoxin] + 2 S-adenosyl-L-methionine = (sulfur carrier)-H + biotin + 2 5'-deoxyadenosine + 2 L-methionine + 2 oxidized [2Fe-2S]-[ferredoxin]. Its pathway is cofactor biosynthesis; biotin biosynthesis; biotin from 7,8-diaminononanoate: step 2/2. Catalyzes the conversion of dethiobiotin (DTB) to biotin by the insertion of a sulfur atom into dethiobiotin via a radical-based mechanism. The chain is Biotin synthase from Xylella fastidiosa (strain M23).